We begin with the raw amino-acid sequence, 242 residues long: UPF0309 protein BAbS19_II03080 (242 aa).

The 185-residue stretch at 30-214 (AADLIAAAAR…ARLVGEGDAP (185 aa)) folds into the SIS domain.

The protein belongs to the UPF0309 family.

In Brucella abortus (strain S19), this protein is UPF0309 protein BAbS19_II03080.